The following is a 116-amino-acid chain: Peptidyl-tRNA hydrolase (116 aa).

The protein belongs to the PTH2 family.

The protein localises to the cytoplasm. It catalyses the reaction an N-acyl-L-alpha-aminoacyl-tRNA + H2O = an N-acyl-L-amino acid + a tRNA + H(+). In terms of biological role, the natural substrate for this enzyme may be peptidyl-tRNAs which drop off the ribosome during protein synthesis. The polypeptide is Peptidyl-tRNA hydrolase (Methanopyrus kandleri (strain AV19 / DSM 6324 / JCM 9639 / NBRC 100938)).